Reading from the N-terminus, the 562-residue chain is Arginine--tRNA ligase (562 aa).

A 'HIGH' region motif is present at residues 129–139 (ANPTGPLHVGH).

The protein belongs to the class-I aminoacyl-tRNA synthetase family. Monomer.

The protein resides in the cytoplasm. The enzyme catalyses tRNA(Arg) + L-arginine + ATP = L-arginyl-tRNA(Arg) + AMP + diphosphate. This Xanthomonas axonopodis pv. citri (strain 306) protein is Arginine--tRNA ligase.